The following is a 150-amino-acid chain: D-aminoacyl-tRNA deacylase (150 aa).

Residues 138 to 139 (GP) carry the Gly-cisPro motif, important for rejection of L-amino acids motif.

It belongs to the DTD family. In terms of assembly, homodimer.

Its subcellular location is the cytoplasm. The enzyme catalyses glycyl-tRNA(Ala) + H2O = tRNA(Ala) + glycine + H(+). The catalysed reaction is a D-aminoacyl-tRNA + H2O = a tRNA + a D-alpha-amino acid + H(+). Functionally, an aminoacyl-tRNA editing enzyme that deacylates mischarged D-aminoacyl-tRNAs. Also deacylates mischarged glycyl-tRNA(Ala), protecting cells against glycine mischarging by AlaRS. Acts via tRNA-based rather than protein-based catalysis; rejects L-amino acids rather than detecting D-amino acids in the active site. By recycling D-aminoacyl-tRNA to D-amino acids and free tRNA molecules, this enzyme counteracts the toxicity associated with the formation of D-aminoacyl-tRNA entities in vivo and helps enforce protein L-homochirality. This Bacteroides fragilis (strain YCH46) protein is D-aminoacyl-tRNA deacylase.